Here is a 254-residue protein sequence, read N- to C-terminus: NAD-dependent glycerol dehydrogenase (254 aa).

18–47 (VVTGAASGIGKAMAELFSEKGAYVVLLDIK) serves as a coordination point for NAD(+). Y160 (proton acceptor) is an active-site residue. K164 is an NAD(+) binding site.

The protein belongs to the short-chain dehydrogenases/reductases (SDR) family. Mg(2+) is required as a cofactor. Requires Mn(2+) as cofactor.

The protein localises to the cytoplasm. It catalyses the reaction glycerol + NAD(+) = dihydroxyacetone + NADH + H(+). Inhibited by Zn(2+). Its function is as follows. Involved in the glycerol metabolism. Catalyzes the NAD-dependent oxidation of glycerol to dihydroxyacetone (glycerone). GolD specifically uses NAD. This Listeria innocua serovar 6a (strain ATCC BAA-680 / CLIP 11262) protein is NAD-dependent glycerol dehydrogenase.